A 971-amino-acid polypeptide reads, in one-letter code: Nitrogen regulatory protein areA (971 aa).

Disordered regions lie at residues 39 to 61 (IHNAPTQRTXNSNRIPNSRDASA), 146 to 169 (HKEEQQQRQDEADARRKKNMDAGS), 262 to 307 (QPAH…VNST), 390 to 416 (SASMSNNNNNSDFYSPPASAYPSNVST), and 587 to 691 (DNNG…GNAP). Residues 42–59 (APTQRTXNSNRIPNSRDA) are compositionally biased toward polar residues. The span at 146 to 159 (HKEEQQQRQDEADA) shows a compositional bias: basic and acidic residues. 2 stretches are compositionally biased toward polar residues: residues 262–274 (QPAHQATQGSEFN) and 297–307 (FSPQVPAVNST). Over residues 390–400 (SASMSNNNNNS) the composition is skewed to low complexity. 2 stretches are compositionally biased toward polar residues: residues 597–606 (LERSQSQSFR) and 632–645 (NGFEQLAQSMQSSP). 2 stretches are compositionally biased toward low complexity: residues 654–663 (SGFSSVAPSR) and 680–691 (AAAGNGNDGNAP). The GATA-type zinc finger occupies 694–718 (CTNCFTQTTPLWRRNPEGQPLCNAC). The disordered stretch occupies residues 742 to 918 (NRGSGTNVPV…PFGSSAGLSS (177 aa)). The segment covering 744–794 (GSGTNVPVGGSSTRSKKTASTLNSRKNSTLSMSTATANSTKPNSSNPTPRV) has biased composition (polar residues). A compositionally biased stretch (low complexity) spans 796 to 826 (TPPATSQPPSSKDVDSPVSGTTSGANTAGST). The segment covering 832 to 845 (GGPGPSSGAVGGKG) has biased composition (gly residues). Over residues 863-875 (SSMSMQRPATASS) the composition is skewed to polar residues. Residues 892 to 918 (SMDIDSPDSTSSIDGPRPFGSSAGLSS) show a composition bias toward low complexity.

The protein localises to the nucleus. Its function is as follows. Major nitrogen regulatory protein. Positively acting regulatory gene of nitrogen metabolite repression. This Fusarium fujikuroi (Bakanae and foot rot disease fungus) protein is Nitrogen regulatory protein areA (AREA).